Reading from the N-terminus, the 1477-residue chain is Alpha-1-inhibitor 3 (1477 aa).

An N-terminal signal peptide occupies residues 1–24 (MKKDREAQLCLFSALLAFLPFASL). A disulfide bond links Cys48 and Cys86. Residues Asn55 and Asn247 are each glycosylated (N-linked (GlcNAc...) asparagine). Cystine bridges form between Cys251-Cys295 and Cys269-Cys283. N-linked (GlcNAc...) asparagine glycans are attached at residues Asn301, Asn321, Asn393, and Asn508. 3 disulfides stabilise this stretch: Cys468–Cys563, Cys595–Cys774, and Cys643–Cys678. The bait region (approximate) stretch occupies residues 601–750 (DQSVLLQKPE…TWIWDLVTVN (150 aa)). N-linked (GlcNAc...) asparagine glycosylation is found at Asn750, Asn777, and Asn872. 4 disulfide bridges follow: Cys850–Cys886, Cys924–Cys1324, Cys1082–Cys1130, and Cys1355–Cys1470. Residues 975 to 978 (CGEQ) constitute a cross-link (isoglutamyl cysteine thioester (Cys-Gln)). Asn994 carries N-linked (GlcNAc...) asparagine glycosylation. Residues Asn1143, Asn1314, and Asn1427 are each glycosylated (N-linked (GlcNAc...) asparagine).

This sequence belongs to the protease inhibitor I39 (alpha-2-macroglobulin) family. As to quaternary structure, monomer.

Its subcellular location is the secreted. In terms of biological role, protease inhibitor with a wide spectrum of protein targets, which attaches through its thioester function. The chain is Alpha-1-inhibitor 3 (A1i3) from Rattus norvegicus (Rat).